Consider the following 255-residue polypeptide: Hydroxyacylglutathione hydrolase (255 aa).

Residues H52, H54, D56, H57, H109, D126, and H166 each contribute to the Zn(2+) site.

It belongs to the metallo-beta-lactamase superfamily. Glyoxalase II family. Monomer. The cofactor is Zn(2+).

The enzyme catalyses an S-(2-hydroxyacyl)glutathione + H2O = a 2-hydroxy carboxylate + glutathione + H(+). Its pathway is secondary metabolite metabolism; methylglyoxal degradation; (R)-lactate from methylglyoxal: step 2/2. Functionally, thiolesterase that catalyzes the hydrolysis of S-D-lactoyl-glutathione to form glutathione and D-lactic acid. The sequence is that of Hydroxyacylglutathione hydrolase from Anaeromyxobacter dehalogenans (strain 2CP-C).